The chain runs to 211 residues: Endonuclease III (211 aa).

In terms of domain architecture, HhH spans 111 to 130 (AHALESLPGVGHKTANVVLN). Residues Cys190, Cys197, Cys200, and Cys206 each coordinate [4Fe-4S] cluster.

This sequence belongs to the Nth/MutY family. [4Fe-4S] cluster serves as cofactor.

The enzyme catalyses 2'-deoxyribonucleotide-(2'-deoxyribose 5'-phosphate)-2'-deoxyribonucleotide-DNA = a 3'-end 2'-deoxyribonucleotide-(2,3-dehydro-2,3-deoxyribose 5'-phosphate)-DNA + a 5'-end 5'-phospho-2'-deoxyribonucleoside-DNA + H(+). Functionally, DNA repair enzyme that has both DNA N-glycosylase activity and AP-lyase activity. The DNA N-glycosylase activity releases various damaged pyrimidines from DNA by cleaving the N-glycosidic bond, leaving an AP (apurinic/apyrimidinic) site. The AP-lyase activity cleaves the phosphodiester bond 3' to the AP site by a beta-elimination, leaving a 3'-terminal unsaturated sugar and a product with a terminal 5'-phosphate. The polypeptide is Endonuclease III (Treponema pallidum (strain Nichols)).